The chain runs to 27 residues: GFKDWMKKAGSWLKKKGPALIKAAMQE.

The protein belongs to the ponericin-G family. Expressed by the venom gland.

It localises to the secreted. Has activity against some Gram-positive bacteria and S.cerevisiae. Has a non-hemolytic activity. This Neoponera apicalis (Ant) protein is U1-poneritoxin-Na3a.